Consider the following 101-residue polypeptide: Urease subunit beta (101 aa).

It belongs to the urease beta subunit family. In terms of assembly, heterotrimer of UreA (gamma), UreB (beta) and UreC (alpha) subunits. Three heterotrimers associate to form the active enzyme.

It localises to the cytoplasm. It carries out the reaction urea + 2 H2O + H(+) = hydrogencarbonate + 2 NH4(+). The protein operates within nitrogen metabolism; urea degradation; CO(2) and NH(3) from urea (urease route): step 1/1. This Albidiferax ferrireducens (strain ATCC BAA-621 / DSM 15236 / T118) (Rhodoferax ferrireducens) protein is Urease subunit beta.